A 354-amino-acid polypeptide reads, in one-letter code: Membrane progestin receptor beta (354 aa).

Residues 1 to 76 (MTTAILERLS…FSLFQKHNEV (76 aa)) are Cytoplasmic-facing. Residues 77 to 97 (VNVWTHLLAALAVLLRFWAFV) traverse the membrane as a helical segment. The Extracellular portion of the chain corresponds to 98 to 111 (EAGALQWASPHTLP). Residues 112-132 (LLLFILSSITYLTCSLLAHLL) form a helical membrane-spanning segment. Over 133-173 (QSKSELSHYTFYFVDYVGVSVYQYGSALAHFFYSSDQAWYE) the chain is Cytoplasmic. A helical transmembrane segment spans residues 174-194 (LFWIFFLPAAAFCGWLSCAGC). Over 195–213 (CYAKYRYRRPYPVMRKICQ) the chain is Extracellular. The helical transmembrane segment at 214-234 (VVPAGLAFVLDISPVAHRVAL) threads the bilayer. The Cytoplasmic portion of the chain corresponds to 235–243 (CHLAGCQEQ). A helical membrane pass occupies residues 244–264 (AAWYHTLQILFFLVSAYFFSC). At 265 to 283 (PVPEKYFPGSCDIVGHGHQ) the chain is on the extracellular side. The helical transmembrane segment at 284–304 (IFHAFLSVCTLSQLEAILLDY) threads the bilayer. Residues 305–315 (QGRHEIFLQRH) lie on the Cytoplasmic side of the membrane. A helical transmembrane segment spans residues 316-336 (GPLSVYSACLSFFVLAACSAA). Residues 337-354 (TATLLRHKVKDRLIKKDS) are Extracellular-facing.

Belongs to the ADIPOR family. As to expression, expressed in brain and testis.

Its subcellular location is the cell membrane. Plasma membrane progesterone (P4) receptor coupled to G proteins. Seems to act through a G(i) mediated pathway. May be involved in oocyte maturation. Also binds dehydroepiandrosterone (DHEA), pregnanolone, pregnenolone and allopregnanolone. The sequence is that of Membrane progestin receptor beta from Mus musculus (Mouse).